Consider the following 253-residue polypeptide: Ubiquinone/menaquinone biosynthesis C-methyltransferase UbiE (253 aa).

S-adenosyl-L-methionine contacts are provided by residues threonine 76, aspartate 97, and 125-126 (NA).

The protein belongs to the class I-like SAM-binding methyltransferase superfamily. MenG/UbiE family.

It catalyses the reaction a 2-demethylmenaquinol + S-adenosyl-L-methionine = a menaquinol + S-adenosyl-L-homocysteine + H(+). The catalysed reaction is a 2-methoxy-6-(all-trans-polyprenyl)benzene-1,4-diol + S-adenosyl-L-methionine = a 5-methoxy-2-methyl-3-(all-trans-polyprenyl)benzene-1,4-diol + S-adenosyl-L-homocysteine + H(+). The protein operates within quinol/quinone metabolism; menaquinone biosynthesis; menaquinol from 1,4-dihydroxy-2-naphthoate: step 2/2. It participates in cofactor biosynthesis; ubiquinone biosynthesis. Methyltransferase required for the conversion of demethylmenaquinol (DMKH2) to menaquinol (MKH2) and the conversion of 2-polyprenyl-6-methoxy-1,4-benzoquinol (DDMQH2) to 2-polyprenyl-3-methyl-6-methoxy-1,4-benzoquinol (DMQH2). This Bradyrhizobium sp. (strain BTAi1 / ATCC BAA-1182) protein is Ubiquinone/menaquinone biosynthesis C-methyltransferase UbiE.